A 668-amino-acid chain; its full sequence is UvrABC system protein B (668 aa).

The 386-residue stretch at 31–416 folds into the Helicase ATP-binding domain; the sequence is QGITDGVPAQ…RGHIIEQIIR (386 aa). Residue 44 to 51 coordinates ATP; the sequence is GTTGSGKT. The Beta-hairpin signature appears at 97 to 120; that stretch reads YYDYYQPEAYIARSDTYIEKSLLI. The 164-residue stretch at 433 to 596 folds into the Helicase C-terminal domain; sequence QIDDLLEEIR…ITPQPIIKPI (164 aa). One can recognise a UVR domain in the interval 621–656; sequence EASIKTYEEAMYQAAQEFQFDEAVKYRDLMNAAKKQ.

This sequence belongs to the UvrB family. As to quaternary structure, forms a heterotetramer with UvrA during the search for lesions. Interacts with UvrC in an incision complex.

Its subcellular location is the cytoplasm. Functionally, the UvrABC repair system catalyzes the recognition and processing of DNA lesions. A damage recognition complex composed of 2 UvrA and 2 UvrB subunits scans DNA for abnormalities. Upon binding of the UvrA(2)B(2) complex to a putative damaged site, the DNA wraps around one UvrB monomer. DNA wrap is dependent on ATP binding by UvrB and probably causes local melting of the DNA helix, facilitating insertion of UvrB beta-hairpin between the DNA strands. Then UvrB probes one DNA strand for the presence of a lesion. If a lesion is found the UvrA subunits dissociate and the UvrB-DNA preincision complex is formed. This complex is subsequently bound by UvrC and the second UvrB is released. If no lesion is found, the DNA wraps around the other UvrB subunit that will check the other stand for damage. The protein is UvrABC system protein B of Chlamydia trachomatis serovar A (strain ATCC VR-571B / DSM 19440 / HAR-13).